A 676-amino-acid polypeptide reads, in one-letter code: Protein timeless (676 aa).

Positions 77–108 (VNTLQKLLNLWFEASLSESSEDNESNTSPPKK) are necessary for normal circadian rhythm. 2 disordered regions span residues 94-145 (ESSE…CDER) and 346-398 (PESI…LVKR). 2 stretches are compositionally biased toward low complexity: residues 101 to 129 (SNTS…SDNG) and 360 to 369 (QGKPQHQKPP). Positions 388-398 (KELRRKKLVKR) match the Nuclear localization signal motif.

It belongs to the timeless family. In terms of assembly, forms a heterodimer with period (PER); the complex then translocates into the nucleus. Post-translationally, phosphorylated with a circadian rhythmicity.

It is found in the nucleus. The protein localises to the cytoplasm. It localises to the perinuclear region. Functionally, required for the production of circadian rhythms. The biological cycle depends on the rhythmic formation and nuclear localization of the TIM-PER complex. Light induces the degradation of TIM, which promotes elimination of PER. Nuclear activity of the heterodimer coordinatively regulates PER and TIM transcription through a negative feedback loop. Behaves as a negative element in circadian transcriptional loop. Does not appear to bind DNA, suggesting indirect transcriptional inhibition. The polypeptide is Protein timeless (tim) (Drosophila hydei (Fruit fly)).